A 476-amino-acid chain; its full sequence is Cysteine--tRNA ligase (476 aa).

Cys36 is a Zn(2+) binding site. A 'HIGH' region motif is present at residues 38–48 (PTVYDYAHIGN). Residues Cys221, His246, and Glu250 each contribute to the Zn(2+) site. The short motif at 278–282 (KMSKS) is the 'KMSKS' region element. Lys281 lines the ATP pocket.

This sequence belongs to the class-I aminoacyl-tRNA synthetase family. As to quaternary structure, monomer. Requires Zn(2+) as cofactor.

The protein localises to the cytoplasm. It catalyses the reaction tRNA(Cys) + L-cysteine + ATP = L-cysteinyl-tRNA(Cys) + AMP + diphosphate. The polypeptide is Cysteine--tRNA ligase (Chlamydia caviae (strain ATCC VR-813 / DSM 19441 / 03DC25 / GPIC) (Chlamydophila caviae)).